Reading from the N-terminus, the 338-residue chain is Nicotinate-nucleotide--dimethylbenzimidazole phosphoribosyltransferase (338 aa).

The active-site Proton acceptor is the E305.

Belongs to the CobT family.

It carries out the reaction 5,6-dimethylbenzimidazole + nicotinate beta-D-ribonucleotide = alpha-ribazole 5'-phosphate + nicotinate + H(+). It participates in nucleoside biosynthesis; alpha-ribazole biosynthesis; alpha-ribazole from 5,6-dimethylbenzimidazole: step 1/2. Catalyzes the synthesis of alpha-ribazole-5'-phosphate from nicotinate mononucleotide (NAMN) and 5,6-dimethylbenzimidazole (DMB). This chain is Nicotinate-nucleotide--dimethylbenzimidazole phosphoribosyltransferase, found in Rhizobium johnstonii (strain DSM 114642 / LMG 32736 / 3841) (Rhizobium leguminosarum bv. viciae).